We begin with the raw amino-acid sequence, 463 residues long: Phosphoglucosamine mutase (463 aa).

The active-site Phosphoserine intermediate is the Ser-101. Residues Ser-101, Asp-256, Asp-258, and Asp-260 each coordinate Mg(2+). At Ser-101 the chain carries Phosphoserine.

Belongs to the phosphohexose mutase family. The cofactor is Mg(2+). Activated by phosphorylation.

The catalysed reaction is alpha-D-glucosamine 1-phosphate = D-glucosamine 6-phosphate. Its function is as follows. Catalyzes the conversion of glucosamine-6-phosphate to glucosamine-1-phosphate. The chain is Phosphoglucosamine mutase from Desulforapulum autotrophicum (strain ATCC 43914 / DSM 3382 / VKM B-1955 / HRM2) (Desulfobacterium autotrophicum).